We begin with the raw amino-acid sequence, 184 residues long: UPF0301 protein ABSDF3201 (184 aa).

This sequence belongs to the UPF0301 (AlgH) family.

The sequence is that of UPF0301 protein ABSDF3201 from Acinetobacter baumannii (strain SDF).